The primary structure comprises 387 residues: Cytochrome b (387 aa).

Transmembrane regions (helical) follow at residues 32–52, 76–98, 113–133, and 179–199; these read FGSL…LLAC, FLLR…LHIG, TWNI…LGYC, and FFSL…MHLI. The heme b site is built by histidine 82 and histidine 96. Heme b contacts are provided by histidine 183 and histidine 197. Histidine 202 contributes to the a ubiquinone binding site. 4 helical membrane passes run 225-245, 289-309, 321-341, and 348-368; these read FLIK…YMVF, QLGV…PLLD, MGKF…WIGG, and FITI…ILIP.

Belongs to the cytochrome b family. As to quaternary structure, fungal cytochrome b-c1 complex contains 10 subunits; 3 respiratory subunits, 2 core proteins and 5 low-molecular weight proteins. Cytochrome b-c1 complex is a homodimer. Heme b is required as a cofactor.

The protein localises to the mitochondrion inner membrane. Component of the ubiquinol-cytochrome c reductase complex (complex III or cytochrome b-c1 complex) that is part of the mitochondrial respiratory chain. The b-c1 complex mediates electron transfer from ubiquinol to cytochrome c. Contributes to the generation of a proton gradient across the mitochondrial membrane that is then used for ATP synthesis. In Schizosaccharomyces octosporus (Fission yeast), this protein is Cytochrome b (cob).